Consider the following 142-residue polypeptide: Small ribosomal subunit protein bS6 (142 aa).

The interval 110–142 (NKKPSHAKEKHEKTEHAHSHHAEEAKSTESHSE) is disordered.

The protein belongs to the bacterial ribosomal protein bS6 family.

Binds together with bS18 to 16S ribosomal RNA. In Helicobacter pylori (strain G27), this protein is Small ribosomal subunit protein bS6.